Reading from the N-terminus, the 348-residue chain is Olfactory receptor 2T4 (348 aa).

Residues 1–57 (MDNITWMASHTGWSDFILMGLFRQSKHPMANITWMANHTGWSDFILLGLFRQSKHPA) are Extracellular-facing. 2 N-linked (GlcNAc...) asparagine glycosylation sites follow: Asn31 and Asn37. A helical membrane pass occupies residues 58–81 (LLCVVIFVVFLMALSGNAVLILLI). At 82 to 89 (HCDAHLHT) the chain is on the cytoplasmic side. Residues 90-111 (PMYFFISQLSLMDMAYISVTVP) form a helical membrane-spanning segment. The Extracellular segment spans residues 112–132 (KMLLDQVMGVNKISAPECGMQ). A disulfide bridge links Cys129 with Cys221. The helical transmembrane segment at 133-152 (MFFYVTLAGSEFFLLATMAY) threads the bilayer. Over 153-171 (DRYVAICHPLRYPVLMNHR) the chain is Cytoplasmic. The helical transmembrane segment at 172–190 (VCLFLSSGCWFLGSVDGFT) threads the bilayer. The Extracellular portion of the chain corresponds to 191–227 (FTPITMTFPFRGSREIHHFFCEVPAVLNLSCSDTSLY). N-linked (GlcNAc...) asparagine glycosylation occurs at Asn218. Residues 228–251 (EIFMYLCCVLMLLIPVVIISSSYL) form a helical membrane-spanning segment. Residues 252–268 (LILLTIHGMNSAEGRKK) lie on the Cytoplasmic side of the membrane. The chain crosses the membrane as a helical span at residues 269–291 (AFATCSSHLTVVILFYGAAIYTY). The Extracellular segment spans residues 292 to 304 (MLPSSYHTPEKDM). A helical membrane pass occupies residues 305–324 (MVSVFYTILTPVVNPLIYSL). Residues 325–348 (RNKDVMGALKKMLTVEPAFQKAME) lie on the Cytoplasmic side of the membrane.

It belongs to the G-protein coupled receptor 1 family.

It localises to the cell membrane. Its function is as follows. Odorant receptor. The chain is Olfactory receptor 2T4 (OR2T4) from Homo sapiens (Human).